We begin with the raw amino-acid sequence, 341 residues long: MRIGVLTAGGDCPGLNAVIRSVVHRAVDNYGDEVIGFEDGYAGLLDGRYRALDLNAVSGILARGGTILGSSRLERDRLREACENAGDMIQNFGIDALIPIGGEGTLTAARMLSDAGLPVVGVPKTIDNDISSTDRTFGFDTAVGVATEAMDRLKTTAESHQRVMVVEVMGRHAGWIALESGMAAGAHGICLPERPFDPADLVKMVEERFSRGKKFAVVCVAEGAHPAEGSMDYGKGAIDKFGHERFQGIGTALAFELERRLGKEAKPVILGHVQRGGVPTAYDRVLATRFGWHAVEAAHRGDFGRMTALRGTDVVMVPLAEAVTELKTVPKDRMDEAESVF.

ATP-binding positions include Gly-10, 72–73, and 102–105; these read RL and GEGT. Glu-103 lines the Mg(2+) pocket. Residues 125–127, Arg-162, 169–171, Glu-222, Lys-266, and 272–275 each bind substrate; these read TID, MGR, and HVQR. Catalysis depends on Asp-127, which acts as the Proton acceptor.

This sequence belongs to the phosphofructokinase type A (PFKA) family. Mixed-substrate PFK group III subfamily. As to quaternary structure, homodimer or homotetramer. Mg(2+) is required as a cofactor.

It is found in the cytoplasm. The enzyme catalyses beta-D-fructose 6-phosphate + ATP = beta-D-fructose 1,6-bisphosphate + ADP + H(+). It functions in the pathway carbohydrate degradation; glycolysis; D-glyceraldehyde 3-phosphate and glycerone phosphate from D-glucose: step 3/4. Its activity is regulated as follows. Allosterically inhibited by phosphoenolpyruvate. Functionally, catalyzes the phosphorylation of D-fructose 6-phosphate to fructose 1,6-bisphosphate by ATP, the first committing step of glycolysis. This is ATP-dependent 6-phosphofructokinase 2 from Streptomyces coelicolor (strain ATCC BAA-471 / A3(2) / M145).